The chain runs to 293 residues: Nucleotide-binding protein BcerKBAB4_4948 (293 aa).

14-21 lines the ATP pocket; sequence GMSGAGKT. 65-68 is a GTP binding site; it reads DLRG.

The protein belongs to the RapZ-like family.

In terms of biological role, displays ATPase and GTPase activities. The protein is Nucleotide-binding protein BcerKBAB4_4948 of Bacillus mycoides (strain KBAB4) (Bacillus weihenstephanensis).